The chain runs to 634 residues: Probable threonine--tRNA ligase, cytoplasmic (634 aa).

A TGS domain is found at 1–61; that stretch reads MSIYVTFKGQ…NENQKIELYD (61 aa).

Belongs to the class-II aminoacyl-tRNA synthetase family.

Its subcellular location is the cytoplasm. The catalysed reaction is tRNA(Thr) + L-threonine + ATP = L-threonyl-tRNA(Thr) + AMP + diphosphate + H(+). This Enterocytozoon bieneusi (strain H348) (Microsporidian parasite) protein is Probable threonine--tRNA ligase, cytoplasmic.